The primary structure comprises 49 residues: Small ribosomal subunit protein uS14B (49 aa).

This sequence belongs to the universal ribosomal protein uS14 family. Zinc-binding uS14 subfamily. In terms of assembly, part of the 30S ribosomal subunit.

Binds 16S rRNA, required for the assembly of 30S particles. The chain is Small ribosomal subunit protein uS14B from Natronomonas pharaonis (strain ATCC 35678 / DSM 2160 / CIP 103997 / JCM 8858 / NBRC 14720 / NCIMB 2260 / Gabara) (Halobacterium pharaonis).